A 188-amino-acid chain; its full sequence is Elongation factor P (188 aa).

The protein belongs to the elongation factor P family.

The protein localises to the cytoplasm. The protein operates within protein biosynthesis; polypeptide chain elongation. In terms of biological role, involved in peptide bond synthesis. Stimulates efficient translation and peptide-bond synthesis on native or reconstituted 70S ribosomes in vitro. Probably functions indirectly by altering the affinity of the ribosome for aminoacyl-tRNA, thus increasing their reactivity as acceptors for peptidyl transferase. The polypeptide is Elongation factor P (Acidiphilium cryptum (strain JF-5)).